A 664-amino-acid chain; its full sequence is Intraflagellar transport protein 70A2 (664 aa).

TPR repeat units follow at residues 11-44, 45-78, 153-186, 188-220, 395-423, 424-456, and 458-491; these read DGEF…SPRS, RAGL…HPEL, PDGL…SGYQ, DVSY…GIRQ, QVQE…EKYI, PVLM…CNDH, and VWKL…NYDN. Residues 507 to 534 are a coiled coil; sequence YIMTSQNEEAEELMRKIEKEEEQLSYGD. Residues 543–576 form a TPR 8 repeat; it reads CIVNLVIGTLYCAKGNYDFGISRVIKSLEPYHKK.

The protein belongs to the TTC30/dfy-1/fleer family. In terms of assembly, interacts wit the IFT B complex component IFT52.

It localises to the cell projection. The protein localises to the cilium. Functionally, required for polyglutamylation of axonemal tubulin. Plays a role in anterograde intraflagellar transport (IFT), the process by which cilia precursors are transported from the base of the cilium to the site of their incorporation at the tip. The protein is Intraflagellar transport protein 70A2 (Ift70a2) of Rattus norvegicus (Rat).